The sequence spans 298 residues: Cyclin-D4-2 (298 aa).

The protein belongs to the cyclin family. Cyclin D subfamily. In terms of assembly, interacts with CDKA-1 to form a kinase complex.

Functionally, may promote cell division. The sequence is that of Cyclin-D4-2 (CYCD4-2) from Arabidopsis thaliana (Mouse-ear cress).